The following is a 301-amino-acid chain: Large ribosomal subunit protein uL18 (301 aa).

This sequence belongs to the universal ribosomal protein uL18 family. In terms of assembly, component of the large ribosomal subunit (LSU). Mature N.crassa ribosomes consist of a small (40S) and a large (60S) subunit. The 40S small subunit contains 1 molecule of ribosomal RNA (18S rRNA) and at least 32 different proteins. The large 60S subunit contains 3 rRNA molecules (26S, 5.8S and 5S rRNA) and at least 42 different proteins.

The protein resides in the cytoplasm. Its function is as follows. Component of the ribosome, a large ribonucleoprotein complex responsible for the synthesis of proteins in the cell. The small ribosomal subunit (SSU) binds messenger RNAs (mRNAs) and translates the encoded message by selecting cognate aminoacyl-transfer RNA (tRNA) molecules. The large subunit (LSU) contains the ribosomal catalytic site termed the peptidyl transferase center (PTC), which catalyzes the formation of peptide bonds, thereby polymerizing the amino acids delivered by tRNAs into a polypeptide chain. The nascent polypeptides leave the ribosome through a tunnel in the LSU and interact with protein factors that function in enzymatic processing, targeting, and the membrane insertion of nascent chains at the exit of the ribosomal tunnel. This chain is Large ribosomal subunit protein uL18 (rpl-5), found in Neurospora crassa (strain ATCC 24698 / 74-OR23-1A / CBS 708.71 / DSM 1257 / FGSC 987).